The primary structure comprises 173 residues: Mitochondrial holo-[acyl-carrier-protein] synthase (173 aa).

Belongs to the P-Pant transferase superfamily. AcpS family.

The protein resides in the mitochondrion. The enzyme catalyses apo-[ACP] + CoA = holo-[ACP] + adenosine 3',5'-bisphosphate + H(+). Functionally, transfers the 4'-phosphopantetheine moiety from coenzyme A to a Ser of mitochondrial acyl-carrier-protein. This is Mitochondrial holo-[acyl-carrier-protein] synthase (PPT2) from Saccharomyces cerevisiae (strain ATCC 204508 / S288c) (Baker's yeast).